The following is a 349-amino-acid chain: Aspartate-semialdehyde dehydrogenase (349 aa).

NADP(+) contacts are provided by residues 12–15 and 39–40; these read TGSV and NS. Residue Arg-113 participates in phosphate binding. Cys-148 acts as the Acyl-thioester intermediate in catalysis. Residue Gln-175 coordinates substrate. 178 to 179 is a binding site for NADP(+); that stretch reads SG. Glu-201 serves as a coordination point for substrate. A phosphate-binding site is contributed by Lys-204. Arg-234 provides a ligand contact to substrate. Residue His-241 is the Proton acceptor of the active site. 326-327 is a binding site for NADP(+); it reads NT.

It belongs to the aspartate-semialdehyde dehydrogenase family. Homodimer.

It catalyses the reaction L-aspartate 4-semialdehyde + phosphate + NADP(+) = 4-phospho-L-aspartate + NADPH + H(+). It participates in amino-acid biosynthesis; L-lysine biosynthesis via DAP pathway; (S)-tetrahydrodipicolinate from L-aspartate: step 2/4. The protein operates within amino-acid biosynthesis; L-methionine biosynthesis via de novo pathway; L-homoserine from L-aspartate: step 2/3. It functions in the pathway amino-acid biosynthesis; L-threonine biosynthesis; L-threonine from L-aspartate: step 2/5. Its function is as follows. Catalyzes the NADPH-dependent formation of L-aspartate-semialdehyde (L-ASA) by the reductive dephosphorylation of L-aspartyl-4-phosphate. The polypeptide is Aspartate-semialdehyde dehydrogenase (Leptospira interrogans serogroup Icterohaemorrhagiae serovar Lai (strain 56601)).